The chain runs to 899 residues: Inositol 1,4,5-triphosphate receptor associated 1 (899 aa).

Disordered regions lie at residues Pro32–Leu110, Arg164–His286, Lys324–Gly391, and Ala463–Gly486. A compositionally biased stretch (basic residues) spans Ser100–Leu110. Ser106 is modified (phosphoserine). The tract at residues Ser140–Ser172 is interaction with PRKG1. The segment covering Ser171–Val180 has biased composition (polar residues). Low complexity predominate over residues Ser181 to Ser203. A compositionally biased stretch (basic and acidic residues) spans Thr266–Phe281. Residues Pro333–Gln351 show a composition bias toward polar residues. Ser382 is modified (phosphoserine). The interaction with ITPR1 stretch occupies residues Asn521–Thr567. A coiled-coil region spans residues Ser534 to Thr632. Phosphoserine is present on residues Ser670 and Ser683. Disordered regions lie at residues Leu695–Ser722 and Thr757–Ser818. The span at Ala699 to Ser715 shows a compositional bias: low complexity. 2 stretches are compositionally biased toward basic and acidic residues: residues Gln759 to Tyr770 and Gly777 to Leu787. Acidic residues predominate over residues Lys788–Lys814. Residues Trp839–Tyr859 form a helical membrane-spanning segment. The disordered stretch occupies residues Glu867 to Gln899. Over residues Ser876 to Gln892 the composition is skewed to polar residues.

In terms of assembly, part of cGMP kinase signaling complex at least composed of ACTA2/alpha-actin, CNN1/calponin H1, PLN/phospholamban, PRKG1 and ITPR1. Interacts with PRKG1/cGKI-beta and ITPR1/IP3R type I. Interacts with HCN4; regulates HCN4 channel activity. Phosphorylated by PRKG1/cGKI. Highly expressed in smooth muscle such as aorta, colon and uterus. Detected in the brain, in the thalamus, in the hippocampus and myenteric plexus. Highly expressed in megakaryocytes. Down-regulated during macrophage differentiation.

Its subcellular location is the membrane. The protein resides in the cytoplasm. It localises to the perinuclear region. The protein localises to the sarcoplasmic reticulum. In terms of biological role, plays a role as NO/PRKG1-dependent regulator of IP3-induced calcium release; its phosphorylation by PRKG1 inhibits bradykinin and IP3-induced calcium release from intracellular stores. Recruits PRKG1 to the endoplasmic reticulum and may mediate the assembly of PRKG1 and ITPR1 in a macrocomplex. Involved in PRKG1 signaling cascade leading to inhibition of platelet activation and aggregation. Also mediates NO-dependent inhibition of calcium signaling in gastrointestinal smooth muscle contributing to NO-dependent relaxation. Plays a role in the regulation of cellular excitability by regulating the hyperpolarization-activated cyclic nucleotide-gated HCN4 channel activity. The sequence is that of Inositol 1,4,5-triphosphate receptor associated 1 (Irag1) from Mus musculus (Mouse).